Consider the following 378-residue polypeptide: Lysocardiolipin acyltransferase 1 (378 aa).

A run of 2 helical transmembrane segments spans residues phenylalanine 9–leucine 29 and isoleucine 46–valine 66. Positions histidine 85–aspartate 90 match the HXXXXD motif motif. 2 helical membrane passes run leucine 302–threonine 322 and phenylalanine 336–leucine 358.

It belongs to the 1-acyl-sn-glycerol-3-phosphate acyltransferase family.

The protein resides in the endoplasmic reticulum membrane. It catalyses the reaction a 1-acyl-sn-glycero-3-phosphate + an acyl-CoA = a 1,2-diacyl-sn-glycero-3-phosphate + CoA. It carries out the reaction a 1-acyl-sn-glycero-3-phospho-(1D-myo-inositol) + an acyl-CoA = a 1,2-diacyl-sn-glycero-3-phospho-(1D-myo-inositol) + CoA. The enzyme catalyses 1-acyl-sn-glycero-3-phospho-(1'-sn-glycerol) + an acyl-CoA = a 1,2-diacyl-sn-glycero-3-phospho-(1'-sn-glycerol) + CoA. The catalysed reaction is 1-hexadecanoyl-sn-glycero-3-phosphate + (9Z)-octadecenoyl-CoA = 1-hexadecanoyl-2-(9Z-octadecenoyl)-sn-glycero-3-phosphate + CoA. It catalyses the reaction 1-(9Z-octadecenoyl)-sn-glycero-3-phosphate + (9Z)-octadecenoyl-CoA = 1,2-di-(9Z-octadecenoyl)-sn-glycero-3-phosphate + CoA. It carries out the reaction 1-(9Z,12Z)-octadecadienoyl-sn-glycero-3-phosphate + (9Z)-octadecenoyl-CoA = 1-(9Z,12Z)-octadecadienoyl-2-(9Z)-octadecenoyl-sn-glycero-3-phosphate + CoA. The enzyme catalyses 1-(9Z,12Z,15Z)-octadecatrienoyl-sn-glycero-3-phosphate + (9Z)-octadecenoyl-CoA = 1-(9Z,12Z,15Z)-octadecatrienoyl-2-(9Z)-octadecenoyl-sn-glycero-3-phosphate + CoA. The catalysed reaction is 1-(9Z-octadecenoyl)-sn-glycero-3-phosphate + hexadecanoyl-CoA = 1-(9Z)-octadecenoyl-2-hexadecanoyl-sn-glycero-3-phosphate + CoA. It catalyses the reaction 1-(9Z-octadecenoyl)-sn-glycero-3-phosphate + octadecanoyl-CoA = 1-(9Z-octadecenoyl)-2-octadecanoyl-sn-glycero-3-phosphate + CoA. It carries out the reaction 1-acyl-sn-glycero-3-phospho-(1'-sn-glycerol) + (9Z)-octadecenoyl-CoA = 1-acyl-2-(9Z-octadecenoyl)-sn-glycero-3-phospho-(1'-sn-glycerol) + CoA. The enzyme catalyses a 1-acyl-sn-glycero-3-phospho-(1D-myo-inositol) + (9Z)-octadecenoyl-CoA = a 1-acyl-2-(9Z-octadecenoyl)-sn-glycero-3-phospho-(1D-myo-inositol) + CoA. The catalysed reaction is 1-hexadecanoyl-sn-glycero-3-phospho-(1D-myo-inositol) + hexadecanoyl-CoA = 1,2-dihexadecanoyl-sn-glycero-3-phospho-(1D-myo-inositol) + CoA. It catalyses the reaction 1-hexadecanoyl-sn-glycero-3-phospho-(1D-myo-inositol) + octadecanoyl-CoA = 1-hexadecanoyl-2-octadecanoyl-sn-glycero-3-phospho-(1D-myo-inositol) + CoA. It carries out the reaction 1-hexadecanoyl-sn-glycero-3-phospho-(1D-myo-inositol) + (9Z)-octadecenoyl-CoA = 1-hexadecanoyl-2-(9Z-octadecenoyl)-sn-glycero-3-phospho-(1D-myo-inositol) + CoA. The enzyme catalyses 1-hexadecanoyl-sn-glycero-3-phospho-(1D-myo-inositol) + (9Z,12Z)-octadecadienoyl-CoA = 1-hexadecanoyl-2-(9Z,12Z-octadecadienoyl)-sn-glycero-3-phospho-(1D-myo-inositol) + CoA. The catalysed reaction is 1-hexadecanoyl-sn-glycero-3-phospho-(1D-myo-inositol) + (5Z,8Z,11Z,14Z)-eicosatetraenoyl-CoA = 1-hexadecanoyl-2-(5Z,8Z,11Z,14Z-eicosatetraenoyl)-sn-glycero-3-phospho-D-myo-inositol + CoA. It catalyses the reaction 1-hexadecanoyl-sn-glycero-3-phospho-(1'-sn-glycerol) + hexadecanoyl-CoA = 1,2-dihexadecanoyl-sn-glycero-3-phospho-(1'-sn-glycerol) + CoA. It carries out the reaction 1-hexadecanoyl-sn-glycero-3-phospho-(1'-sn-glycerol) + octadecanoyl-CoA = 1-hexadecanoyl-2-octadecanoyl-sn-glycero-3-phospho-(1'-sn-glycerol) + CoA. The enzyme catalyses 1-hexadecanoyl-sn-glycero-3-phospho-(1'-sn-glycerol) + (9Z)-octadecenoyl-CoA = 1-hexadecanoyl-2-(9Z-octadecenoyl)-sn-glycero-3-phospho-(1'-sn-glycerol) + CoA. The catalysed reaction is 1-hexadecanoyl-sn-glycero-3-phospho-(1'-sn-glycerol) + (9Z,12Z)-octadecadienoyl-CoA = 1-hexadecanoyl-2-(9Z,12Z-octadecadienoyl)-sn-glycero-3-phospho-(1'-sn-glycerol) + CoA. It catalyses the reaction 1-tetradecanoyl-sn-glycero-3-phospho-(1'-sn-glycerol) + (9Z)-octadecenoyl-CoA = 1-tetradecanoyl-2-(9Z-octadecenoyl)-sn-glycero-3-phospho-(1'-sn-glycerol) + CoA. It carries out the reaction 1-octadecanoyl-sn-glycero-3-phospho-(1'-sn-glycerol) + (9Z)-octadecenoyl-CoA = 1-octadecanoyl-2-(9Z-octadecenoyl)-sn-glycero-3-phospho-(1'-sn-glycerol) + CoA. The enzyme catalyses 1-(9Z-octadecenoyl)-sn-glycero-3-phospho-(1'-sn-glycerol) + (9Z)-octadecenoyl-CoA = 1,2-di-(9Z-octadecenoyl)-sn-glycero-3-phospho-(1'-sn-glycerol) + CoA. The catalysed reaction is 1-hexadecanoyl-sn-glycero-3-phospho-(1D-myo-inositol) + dodecanoyl-CoA = 1-hexadecanoyl-2-dodecanoyl-sn-glycero-3-phospho-(1D-myo-inositol) + CoA. It catalyses the reaction 1',3'-bis-[1-acyl-sn-glycero-3-phospho]-glycerol + (9Z)-octadecenoyl-CoA = 1'-[1-acyl-2-(9Z)-octadecenoyl-sn-glycero-3-phospho],3'-[1-acyl,2-hydroxy-sn-glycero-3-phospho]-glycerol + CoA. It carries out the reaction 1'-[1,2-diacyl-sn-glycero-3-phospho],3'-[1-acyl-sn-glycero-3-phospho]-glycerol + (9Z)-octadecenoyl-CoA = 1'-[1,2-diacyl-sn-glycero-3-phospho],3'-[1-acyl,2-(9Z)-octadecenoyl-sn-glycero-3-phospho]-glycerol + CoA. The enzyme catalyses 1'-[1,2-diacyl-sn-glycero-3-phospho],3'-[1-acyl-sn-glycero-3-phospho]-glycerol + (9Z,12Z)-octadecadienoyl-CoA = 1'-[1,2-diacyl-sn-glycero-3-phospho],3'-[1-acyl,2-(9Z,12Z)-octadecadienoyl-sn-glycero-3-phospho]-glycerol + CoA. The catalysed reaction is 1'-[1,2-diacyl-sn-glycero-3-phospho],3'-[1-acyl-sn-glycero-3-phospho]-glycerol + dodecanoyl-CoA = 1'-[1,2-diacyl-sn-glycero-3-phospho],3'-[1-acyl,2-dodecanoyl-sn-glycero-3-phospho]-glycerol + CoA. It catalyses the reaction 1',3'-bis-[1-acyl-sn-glycero-3-phospho]-glycerol + dodecanoyl-CoA = 1'-[1-acyl-2-dodecanoyl-sn-glycero-3-phospho],3'-[1-acyl,2-hydroxy-sn-glycero-3-phospho]-glycerol + CoA. It carries out the reaction a 1-acyl-sn-glycero-3-phosphate + (9Z)-octadecenoyl-CoA = a 1-acyl-2-(9Z-octadecenoyl)-sn-glycero-3-phosphate + CoA. The enzyme catalyses 1',3'-bis-[1-acyl-sn-glycero-3-phospho]-glycerol + (9Z,12Z)-octadecadienoyl-CoA = 1'-[1-acyl-2-(9Z,12Z)-octadecadienoyl-sn-glycero-3-phospho],3'-[1-acyl,2-hydroxy-sn-glycero-3-phospho]-glycerol + CoA. The catalysed reaction is 1',3'-bis-[1-acyl-sn-glycero-3-phospho]-glycerol + hexadecanoyl-CoA = 1'-[1-acyl-2-hexadecanoyl-sn-glycero-3-phospho],3'-[1-acyl,2-hydroxy-sn-glycero-3-phospho]-glycerol + CoA. It catalyses the reaction 1',3'-bis-[1-acyl-sn-glycero-3-phospho]-glycerol + octadecanoyl-CoA = 1'-[1-acyl-2-octadecanoyl-sn-glycero-3-phospho],3'-[1-acyl,2-hydroxy-sn-glycero-3-phospho]-glycerol + CoA. It carries out the reaction 1'-[1,2-diacyl-sn-glycero-3-phospho],3'-[1-acyl-sn-glycero-3-phospho]-glycerol + octanoyl-CoA = 1'-[1,2-diacyl-sn-glycero-3-phospho],3'-[1-acyl,2-octanoyl-sn-glycero-3-phospho]-glycerol + CoA. The enzyme catalyses 1',3'-bis-[1-acyl-sn-glycero-3-phospho]-glycerol + octanoyl-CoA = 1'-[1-acyl-2-octanoyl-sn-glycero-3-phospho],3'-[1-acyl,2-hydroxy-sn-glycero-3-phospho]-glycerol + CoA. The catalysed reaction is 1'-[1,2-diacyl-sn-glycero-3-phospho],3'-[1-acyl-sn-glycero-3-phospho]-glycerol + hexadecanoyl-CoA = 1'-[1,2-diacyl-sn-glycero-3-phospho],3'-[1-acyl,2-hexadecanoyl-sn-glycero-3-phospho]-glycerol + CoA. It catalyses the reaction 1'-[1,2-diacyl-sn-glycero-3-phospho],3'-[1-acyl-sn-glycero-3-phospho]-glycerol + (5Z,8Z,11Z,14Z)-eicosatetraenoyl-CoA = 1'-[1,2-diacyl-sn-glycero-3-phospho],3'-[1-acyl,2-(5Z,8Z,11Z,14Z)-eicosatetraenoyl-sn-glycero-3-phospho]-glycerol + CoA. It carries out the reaction 1',3'-bis-[1-acyl-sn-glycero-3-phospho]-glycerol + (5Z,8Z,11Z,14Z)-eicosatetraenoyl-CoA = 1'-[1-acyl-2-(5Z,8Z,11Z,14Z)-eicosatetraenoyl-sn-glycero-3-phospho],3'-[1-acyl,2-hydroxy-sn-glycero-3-phospho]-glycerol + CoA. The enzyme catalyses a 1-acyl-sn-glycero-3-phospho-(1D-myo-inositol) + octadecanoyl-CoA = a 1-acyl-2-octadecanoyl-sn-glycero-3-phospho-(1D-myo-inositol) + CoA. The catalysed reaction is a 2-acyl-sn-glycero-3-phospho-D-myo-inositol + octadecanoyl-CoA = 1-octadecanoyl-2-acyl-sn-glycero-3-phospho-1D-myo-inositol + CoA. It participates in phospholipid metabolism; CDP-diacylglycerol biosynthesis; CDP-diacylglycerol from sn-glycerol 3-phosphate: step 2/3. In terms of biological role, exhibits acyl-CoA:lysocardiolipin acyltransferase (ALCAT) activity; catalyzes the reacylation of lyso-cardiolipin to cardiolipin (CL), a key step in CL remodeling. Recognizes both monolysocardiolipin and dilysocardiolipin as substrates with a preference for linoleoyl-CoA and oleoyl-CoA as acyl donors. Also exhibits 1-acyl-sn-glycerol-3-phosphate acyltransferase activity (AGPAT) activity; converts 1-acyl-sn-glycerol-3- phosphate (lysophosphatidic acid or LPA) into 1,2-diacyl-sn-glycerol-3- phosphate (phosphatidic acid or PA) by incorporating an acyl moiety at the sn-2 position of the glycerol backbone. Possesses both lysophosphatidylinositol acyltransferase (LPIAT) and lysophosphatidylglycerol acyltransferase (LPGAT) activities. Required for establishment of the hematopoietic and endothelial lineages. The protein is Lysocardiolipin acyltransferase 1 (LCLAT1) of Gallus gallus (Chicken).